Reading from the N-terminus, the 350-residue chain is tRNA uridine(34) hydroxylase (350 aa).

Residues Asp146–Leu240 enclose the Rhodanese domain. Cys200 (cysteine persulfide intermediate) is an active-site residue.

Belongs to the TrhO family.

It catalyses the reaction uridine(34) in tRNA + AH2 + O2 = 5-hydroxyuridine(34) in tRNA + A + H2O. In terms of biological role, catalyzes oxygen-dependent 5-hydroxyuridine (ho5U) modification at position 34 in tRNAs, the first step in 5-carboxymethoxyuridine (cmo5U) biosynthesis. May be part of an alternate pathway, which is able to bypass cmo5U biogenesis in a subset of tRNAs under aerobic conditions. In Escherichia coli O157:H7, this protein is tRNA uridine(34) hydroxylase.